The chain runs to 188 residues: Shikimate kinase (188 aa).

Position 21-26 (21-26 (GAGKTT)) interacts with ATP. Threonine 25 is a binding site for Mg(2+). The substrate site is built by aspartate 43, arginine 67, and glycine 90. Residue arginine 130 participates in ATP binding. Arginine 148 lines the substrate pocket.

This sequence belongs to the shikimate kinase family. Monomer. Mg(2+) serves as cofactor.

The protein localises to the cytoplasm. It catalyses the reaction shikimate + ATP = 3-phosphoshikimate + ADP + H(+). It participates in metabolic intermediate biosynthesis; chorismate biosynthesis; chorismate from D-erythrose 4-phosphate and phosphoenolpyruvate: step 5/7. In terms of biological role, catalyzes the specific phosphorylation of the 3-hydroxyl group of shikimic acid using ATP as a cosubstrate. This chain is Shikimate kinase, found in Geobacillus kaustophilus (strain HTA426).